A 261-amino-acid polypeptide reads, in one-letter code: 5'-nucleotidase SurE (261 aa).

A divalent metal cation-binding residues include aspartate 8, aspartate 9, serine 43, and asparagine 96.

Belongs to the SurE nucleotidase family. A divalent metal cation serves as cofactor.

It is found in the cytoplasm. It catalyses the reaction a ribonucleoside 5'-phosphate + H2O = a ribonucleoside + phosphate. Functionally, nucleotidase that shows phosphatase activity on nucleoside 5'-monophosphates. In Dinoroseobacter shibae (strain DSM 16493 / NCIMB 14021 / DFL 12), this protein is 5'-nucleotidase SurE.